The primary structure comprises 774 residues: Ion-translocating oxidoreductase complex subunit C (774 aa).

2 consecutive 4Fe-4S ferredoxin-type domains span residues 368 to 398 (ELTS…QQLQ) and 408 to 437 (KCEE…VQYY). Positions 378, 381, 384, 388, 417, 420, 423, and 427 each coordinate [4Fe-4S] cluster. The segment covering 459–490 (ARFEEKKARMERDKAERENRFKQAAEDRRKEM) has biased composition (basic and acidic residues). 2 disordered regions span residues 459-496 (ARFE…QGGS) and 533-774 (AKQA…EEKD). The segment covering 533 to 545 (AKQAEAAQSGASE) has biased composition (low complexity). Basic and acidic residues predominate over residues 550 to 572 (EMAKLREERKRQARERKAQKGEV). The span at 605–618 (TESAAQPAQATPSS) shows a compositional bias: low complexity. Composition is skewed to polar residues over residues 645 to 658 (TEST…TPSS), 686 to 698 (ESAA…TPSS), 725 to 738 (TESA…TPSS), and 762 to 774 (QQSS…EEKD).

The protein belongs to the 4Fe4S bacterial-type ferredoxin family. RnfC subfamily. The complex is composed of six subunits: RnfA, RnfB, RnfC, RnfD, RnfE and RnfG. Requires [4Fe-4S] cluster as cofactor.

It is found in the cell inner membrane. In terms of biological role, part of a membrane-bound complex that couples electron transfer with translocation of ions across the membrane. This is Ion-translocating oxidoreductase complex subunit C from Vibrio cholerae serotype O1 (strain ATCC 39315 / El Tor Inaba N16961).